A 429-amino-acid polypeptide reads, in one-letter code: C4-dicarboxylate transport protein (429 aa).

Helical transmembrane passes span 3–23 (LTIFKSLYFQVLTAITLGVLL), 44–64 (LIKMIIAPVIFCTVVTGIAGM), 76–96 (IALLYFEIVSTIALLIGLLIV), 142–162 (IGAFASGNILQVLLFAVLFGF), 184–204 (VIFGIINMIMRLAPLGAFGAM), 222–242 (LIACFYLTCILFVVVVLGSIA), 326–346 (VIHQVTLLVVLLLSSKGAAGV), and 352–372 (IVLAATISAVGHLPLAGLALI).

The protein belongs to the dicarboxylate/amino acid:cation symporter (DAACS) (TC 2.A.23) family.

It is found in the cell inner membrane. Its function is as follows. Responsible for the transport of dicarboxylates such as succinate, fumarate, and malate from the periplasm across the membrane. This is C4-dicarboxylate transport protein from Serratia proteamaculans (strain 568).